The sequence spans 274 residues: 2,3,4,5-tetrahydropyridine-2,6-dicarboxylate N-succinyltransferase (274 aa).

Substrate-binding residues include Arg103 and Asp140.

Belongs to the transferase hexapeptide repeat family. Homotrimer.

It localises to the cytoplasm. The enzyme catalyses (S)-2,3,4,5-tetrahydrodipicolinate + succinyl-CoA + H2O = (S)-2-succinylamino-6-oxoheptanedioate + CoA. It participates in amino-acid biosynthesis; L-lysine biosynthesis via DAP pathway; LL-2,6-diaminopimelate from (S)-tetrahydrodipicolinate (succinylase route): step 1/3. The protein is 2,3,4,5-tetrahydropyridine-2,6-dicarboxylate N-succinyltransferase of Haemophilus ducreyi (strain 35000HP / ATCC 700724).